The primary structure comprises 116 residues: Cuticle protein AM1274 (116 aa).

Glutamine 1 carries the post-translational modification Pyrrolidone carboxylic acid. Positions glutamine 1–asparagine 22 are disordered. The region spanning aspartate 20–histidine 85 is the Chitin-binding type R&amp;R domain. Residue threonine 83 is glycosylated (O-linked (HexNAc) threonine).

Arthrodial membrane.

The polypeptide is Cuticle protein AM1274 (Cancer pagurus (Rock crab)).